Consider the following 79-residue polypeptide: Sec-independent protein translocase protein TatA (79 aa).

Residues Met1–Gly21 form a helical membrane-spanning segment.

This sequence belongs to the TatA/E family. The Tat system comprises two distinct complexes: a TatABC complex, containing multiple copies of TatA, TatB and TatC subunits, and a separate TatA complex, containing only TatA subunits. Substrates initially bind to the TatABC complex, which probably triggers association of the separate TatA complex to form the active translocon.

It is found in the cell inner membrane. Its function is as follows. Part of the twin-arginine translocation (Tat) system that transports large folded proteins containing a characteristic twin-arginine motif in their signal peptide across membranes. TatA could form the protein-conducting channel of the Tat system. The sequence is that of Sec-independent protein translocase protein TatA from Campylobacter lari (strain RM2100 / D67 / ATCC BAA-1060).